A 165-amino-acid chain; its full sequence is Phosphopantetheine adenylyltransferase (165 aa).

Substrate is bound at residue serine 9. ATP contacts are provided by residues 9–10 (SF) and histidine 17. 3 residues coordinate substrate: lysine 41, isoleucine 75, and arginine 89. ATP contacts are provided by residues 90-92 (GVR), glutamate 100, and 125-131 (YLFVRSD).

Belongs to the bacterial CoaD family. In terms of assembly, homohexamer. Mg(2+) serves as cofactor.

It is found in the cytoplasm. It carries out the reaction (R)-4'-phosphopantetheine + ATP + H(+) = 3'-dephospho-CoA + diphosphate. Its pathway is cofactor biosynthesis; coenzyme A biosynthesis; CoA from (R)-pantothenate: step 4/5. Reversibly transfers an adenylyl group from ATP to 4'-phosphopantetheine, yielding dephospho-CoA (dPCoA) and pyrophosphate. The chain is Phosphopantetheine adenylyltransferase from Borrelia duttonii (strain Ly).